Reading from the N-terminus, the 185-residue chain is Large ribosomal subunit protein uL22 (185 aa).

Residues 157-185 (VAAPSPEEDAPKKKQSKKKMARQKLMQRD) form a disordered region. The span at 169-178 (KKQSKKKMAR) shows a compositional bias: basic residues.

This sequence belongs to the universal ribosomal protein uL22 family.

This is Large ribosomal subunit protein uL22 (RpL17) from Ixodes scapularis (Black-legged tick).